The chain runs to 464 residues: Siroheme synthase (464 aa).

The precorrin-2 dehydrogenase /sirohydrochlorin ferrochelatase stretch occupies residues 1–203 (MDYLPLFHKL…GQGAEAERLL (203 aa)). Residues 22–23 (EI) and 43–44 (PE) each bind NAD(+). A Phosphoserine modification is found at Ser-128. Positions 216 to 464 (GEVYLVGAGP…AWFEGSQQDQ (249 aa)) are uroporphyrinogen-III C-methyltransferase. An S-adenosyl-L-methionine-binding site is contributed by Pro-225. Asp-248 serves as the catalytic Proton acceptor. The active-site Proton donor is the Lys-270. S-adenosyl-L-methionine-binding positions include 301 to 303 (GGD), Ile-306, 331 to 332 (TA), Met-383, and Gly-412.

The protein in the N-terminal section; belongs to the precorrin-2 dehydrogenase / sirohydrochlorin ferrochelatase family. This sequence in the C-terminal section; belongs to the precorrin methyltransferase family.

The catalysed reaction is uroporphyrinogen III + 2 S-adenosyl-L-methionine = precorrin-2 + 2 S-adenosyl-L-homocysteine + H(+). It carries out the reaction precorrin-2 + NAD(+) = sirohydrochlorin + NADH + 2 H(+). It catalyses the reaction siroheme + 2 H(+) = sirohydrochlorin + Fe(2+). The protein operates within cofactor biosynthesis; adenosylcobalamin biosynthesis; precorrin-2 from uroporphyrinogen III: step 1/1. It functions in the pathway cofactor biosynthesis; adenosylcobalamin biosynthesis; sirohydrochlorin from precorrin-2: step 1/1. Its pathway is porphyrin-containing compound metabolism; siroheme biosynthesis; precorrin-2 from uroporphyrinogen III: step 1/1. It participates in porphyrin-containing compound metabolism; siroheme biosynthesis; siroheme from sirohydrochlorin: step 1/1. The protein operates within porphyrin-containing compound metabolism; siroheme biosynthesis; sirohydrochlorin from precorrin-2: step 1/1. In terms of biological role, multifunctional enzyme that catalyzes the SAM-dependent methylations of uroporphyrinogen III at position C-2 and C-7 to form precorrin-2 via precorrin-1. Then it catalyzes the NAD-dependent ring dehydrogenation of precorrin-2 to yield sirohydrochlorin. Finally, it catalyzes the ferrochelation of sirohydrochlorin to yield siroheme. The sequence is that of Siroheme synthase from Pseudomonas putida (strain W619).